We begin with the raw amino-acid sequence, 403 residues long: Phosphoglycerate kinase (403 aa).

Substrate-binding positions include 21–23 (DFN), Arg37, 60–63 (HLGR), Arg125, and Arg158. Residues Lys209, Glu332, and 359 to 362 (GGDS) contribute to the ATP site.

It belongs to the phosphoglycerate kinase family. As to quaternary structure, monomer.

Its subcellular location is the cytoplasm. The enzyme catalyses (2R)-3-phosphoglycerate + ATP = (2R)-3-phospho-glyceroyl phosphate + ADP. Its pathway is carbohydrate degradation; glycolysis; pyruvate from D-glyceraldehyde 3-phosphate: step 2/5. The chain is Phosphoglycerate kinase from Koribacter versatilis (strain Ellin345).